Here is a 474-residue protein sequence, read N- to C-terminus: ATP synthase subunit beta 2 (474 aa).

153–160 provides a ligand contact to ATP; that stretch reads GGAGVGKT.

Belongs to the ATPase alpha/beta chains family. In terms of assembly, F-type ATPases have 2 components, CF(1) - the catalytic core - and CF(0) - the membrane proton channel. CF(1) has five subunits: alpha(3), beta(3), gamma(1), delta(1), epsilon(1). CF(0) has three main subunits: a(1), b(2) and c(9-12). The alpha and beta chains form an alternating ring which encloses part of the gamma chain. CF(1) is attached to CF(0) by a central stalk formed by the gamma and epsilon chains, while a peripheral stalk is formed by the delta and b chains.

It is found in the cell inner membrane. It carries out the reaction ATP + H2O + 4 H(+)(in) = ADP + phosphate + 5 H(+)(out). Its function is as follows. Produces ATP from ADP in the presence of a proton gradient across the membrane. The catalytic sites are hosted primarily by the beta subunits. The protein is ATP synthase subunit beta 2 of Syntrophotalea carbinolica (strain DSM 2380 / NBRC 103641 / GraBd1) (Pelobacter carbinolicus).